Here is a 317-residue protein sequence, read N- to C-terminus: tRNA dimethylallyltransferase (317 aa).

18 to 25 (GPTATGKT) lines the ATP pocket. 20 to 25 (TATGKT) is a substrate binding site. Interaction with substrate tRNA regions lie at residues 43 to 46 (DSAL), 167 to 171 (QRIQR), and 281 to 288 (KRQITWLR).

Belongs to the IPP transferase family. Monomer. Mg(2+) is required as a cofactor.

It carries out the reaction adenosine(37) in tRNA + dimethylallyl diphosphate = N(6)-dimethylallyladenosine(37) in tRNA + diphosphate. Catalyzes the transfer of a dimethylallyl group onto the adenine at position 37 in tRNAs that read codons beginning with uridine, leading to the formation of N6-(dimethylallyl)adenosine (i(6)A). The protein is tRNA dimethylallyltransferase of Alkalilimnicola ehrlichii (strain ATCC BAA-1101 / DSM 17681 / MLHE-1).